Consider the following 204-residue polypeptide: uncharacterized protein (204 aa).

The N-terminal stretch at 1–17 (MKRLVTGLLALSLFLAA) is a signal peptide. Residues 17-100 (ACGQDSDQQK…NNNQANNNQK (84 aa)) form a disordered region. A lipid anchor (N-palmitoyl cysteine) is attached at Cys18. The S-diacylglycerol cysteine moiety is linked to residue Cys18. Over residues 23–70 (DQQKDGNKEKDDKAKTEQQDKKTNDSSKDKKDNKDDSKDVNKDNKDNS) the composition is skewed to basic and acidic residues. A compositionally biased stretch (low complexity) spans 71–100 (ANDNQQQSNSNATNNDQNQTNNNQANNNQK).

Its subcellular location is the cell membrane. This is an uncharacterized protein from Staphylococcus aureus (strain MSSA476).